The chain runs to 401 residues: Argininosuccinate synthase (401 aa).

8 to 16 (AYSGGLDTS) lines the ATP pocket. Tyr-85 serves as a coordination point for L-citrulline. Gly-115 serves as a coordination point for ATP. L-aspartate is bound by residues Thr-117, Asn-121, and Asp-122. Asn-121 contacts L-citrulline. 4 residues coordinate L-citrulline: Arg-125, Ser-173, Glu-258, and Tyr-270.

This sequence belongs to the argininosuccinate synthase family. Type 1 subfamily. As to quaternary structure, homotetramer.

The protein localises to the cytoplasm. It catalyses the reaction L-citrulline + L-aspartate + ATP = 2-(N(omega)-L-arginino)succinate + AMP + diphosphate + H(+). It functions in the pathway amino-acid biosynthesis; L-arginine biosynthesis; L-arginine from L-ornithine and carbamoyl phosphate: step 2/3. The polypeptide is Argininosuccinate synthase (Staphylococcus aureus (strain Mu3 / ATCC 700698)).